The chain runs to 375 residues: INO80 complex subunit B (375 aa).

The segment at 1 to 84 (MSACVPTVSS…GPTLQTPAKP (84 aa)) is disordered. Residues 50-68 (HGVHKKKHKKHKKKHKKKH) show a composition bias toward basic residues. 5 positions are modified to phosphoserine: Ser-114, Ser-116, Ser-144, Ser-147, and Ser-149. Disordered regions lie at residues 143–165 (DSNL…EEEE), 201–220 (LQKA…GGGC), 262–287 (TAAP…AAPA), and 312–331 (PTAV…CSVP). Residues 230–262 (LLKREERARKRRLQAARRAEEHKNQTIERLTKT) adopt a coiled-coil conformation. The HIT-type zinc finger occupies 324–355 (PAPRCSVPGCPHPRRYACSRTGQALCSLQCYR).

In terms of assembly, component of the chromatin remodeling INO80 complex; specifically part of a complex module associated with the helicase ATP-binding and the helicase C-terminal domain of INO80. Interacts with RP9. In terms of tissue distribution, expressed strongly in the testis and moderately in the kidney, skeletal muscle, liver and lung.

It localises to the nucleus. Its subcellular location is the nucleolus. Proposed core component of the chromatin remodeling INO80 complex which is involved in transcriptional regulation, DNA replication and probably DNA repair. This chain is INO80 complex subunit B (Ino80b), found in Mus musculus (Mouse).